Here is a 179-residue protein sequence, read N- to C-terminus: uncharacterized protein (179 aa).

Positions 1–27 form a signal peptide, or 24; sequence MKTISKQLSAVIFPFIFSACVSQSASS.

This is an uncharacterized protein from Haemophilus influenzae (strain ATCC 51907 / DSM 11121 / KW20 / Rd).